The primary structure comprises 98 residues: DNA/RNA-binding protein Alba (98 aa).

Position 16 is an N6-acetyllysine (Lys16).

The protein belongs to the histone-like Alba family. Post-translationally, acetylated. Acetylation at Lys-16 decreases DNA-binding affinity.

The protein localises to the cytoplasm. Its subcellular location is the chromosome. Binds double-stranded DNA tightly but without sequence specificity. Involved in DNA compaction. This chain is DNA/RNA-binding protein Alba, found in Metallosphaera sedula (strain ATCC 51363 / DSM 5348 / JCM 9185 / NBRC 15509 / TH2).